A 162-amino-acid chain; its full sequence is MDIKEIKVGIADLNVGKNPDKIITVGLGSCIGIALYDGIKCIGGLSHIMLPDSTQFSKVTNPMKFADLAIPILVEKMEKLGARKNGLKAKICGGASMFNFSDKSMVMDIGNRNGKAVKEKLKELSIPLLAEDIGGNKGRTMIFDTSTGKVYIKTVGLGTKEI.

The protein belongs to the CheD family.

The enzyme catalyses L-glutaminyl-[protein] + H2O = L-glutamyl-[protein] + NH4(+). In terms of biological role, probably deamidates glutamine residues to glutamate on methyl-accepting chemotaxis receptors (MCPs), playing an important role in chemotaxis. The protein is Probable chemoreceptor glutamine deamidase CheD of Clostridium botulinum (strain ATCC 19397 / Type A).